A 491-amino-acid chain; its full sequence is Transmembrane protein 39B (491 aa).

A disordered region spans residues 1–56; that stretch reads MAGGRRGANRTTYCRSPLSNDTGSVGNGNHSTSSPVTGVRSRTRNGSGTGMSSPPL. Residues N9, N20, N29, and N45 are each glycosylated (N-linked (GlcNAc...) asparagine). Composition is skewed to polar residues over residues 9–36 and 44–56; these read NRTT…SSPV and RNGS…SPPL. A run of 8 helical transmembrane segments spans residues 79–99, 115–135, 152–172, 185–205, 290–310, 322–342, 423–443, and 449–469; these read LFEL…YVNI, TSLN…IVLA, LSFP…TLAG, TYSV…IPFF, EVLV…VWFV, CELF…HLLP, ILNI…YSLM, and HQTI…FKLL.

This sequence belongs to the TMEM39 family. As to expression, expressed in the ovary, followed by the intestine and brain.

The protein localises to the endoplasmic reticulum membrane. Functionally, may protect the cells against DNA damage caused by exposure to the cold-warming stress and facilitates tissue damage repair during the recovery phase. This chain is Transmembrane protein 39B, found in Danio rerio (Zebrafish).